Here is a 440-residue protein sequence, read N- to C-terminus: MPPAPLENSPGASASDTIFALSSGAPPAGVAVVRISGPMAGVAIDRLTGSRPRPAARRASLRALTNPDGGALLDRALLLWLPGPGTATGEDMAELHLHGGRAVTAAVLAALGRLPGLRPATAGEFTRRAFETGRIDLNEAEALADLLAAETEAQRRNAMLLAGGALSRALEDWQHRVLSLAARLEAQLDFSDEEDVAPLDPGFAAELAALDAEVVRWRGRLPVERLRDGVRVVLAGPPNAGKSTLLNALAGREAAIVTPIAGTTRDLIEAPVALGGIPFLLTDTAGLHEGTGDAVEAIGIDRAGQAIAAADIVLWLGDPGCAPAGSVRIGAQADRRTHDSAAHDLLVSARSGTGMDDLVALLLDRAAGLLPGEGEAALSARQRAALDRLGEALALAREEGDPILVAEGLRLARAAIDALTGRAGTEDMLDGLFGRFCIGK.

The (6S)-5-formyl-5,6,7,8-tetrahydrofolate site is built by Arg-34, Glu-94, and Arg-134. One can recognise a TrmE-type G domain in the interval 229–367 (GVRVVLAGPP…LVALLLDRAA (139 aa)). Asn-239 is a K(+) binding site. Residues 239–244 (NAGKST), 258–264 (TPIAGTT), 283–286 (DTAG), and 348–350 (SAR) each bind GTP. Ser-243 is a binding site for Mg(2+). 3 residues coordinate K(+): Thr-258, Ile-260, and Thr-263. Thr-264 serves as a coordination point for Mg(2+). Lys-440 is a binding site for (6S)-5-formyl-5,6,7,8-tetrahydrofolate.

Belongs to the TRAFAC class TrmE-Era-EngA-EngB-Septin-like GTPase superfamily. TrmE GTPase family. Homodimer. Heterotetramer of two MnmE and two MnmG subunits. The cofactor is K(+).

The protein resides in the cytoplasm. In terms of biological role, exhibits a very high intrinsic GTPase hydrolysis rate. Involved in the addition of a carboxymethylaminomethyl (cmnm) group at the wobble position (U34) of certain tRNAs, forming tRNA-cmnm(5)s(2)U34. The protein is tRNA modification GTPase MnmE of Rhizorhabdus wittichii (strain DSM 6014 / CCUG 31198 / JCM 15750 / NBRC 105917 / EY 4224 / RW1) (Sphingomonas wittichii).